The chain runs to 280 residues: Energy-coupling factor transporter ATP-binding protein EcfA1 (280 aa).

One can recognise an ABC transporter domain in the interval 6 to 241; the sequence is LRTENISFQY…SHMLQEIGLD (236 aa). An ATP-binding site is contributed by 40-47; the sequence is GQNGSGKS.

The protein belongs to the ABC transporter superfamily. Energy-coupling factor EcfA family. Forms a stable energy-coupling factor (ECF) transporter complex composed of 2 membrane-embedded substrate-binding proteins (S component), 2 ATP-binding proteins (A component) and 2 transmembrane proteins (T component).

It localises to the cell membrane. Functionally, ATP-binding (A) component of a common energy-coupling factor (ECF) ABC-transporter complex. Unlike classic ABC transporters this ECF transporter provides the energy necessary to transport a number of different substrates. In Bacillus cereus (strain ZK / E33L), this protein is Energy-coupling factor transporter ATP-binding protein EcfA1.